A 745-amino-acid polypeptide reads, in one-letter code: Capsid protein (745 aa).

Disordered stretches follow at residues 44 to 64, 580 to 602, 638 to 662, and 678 to 699; these read RRRF…GRRK, SQAI…TLPR, EYSS…RPEG, and QDSQ…QAHQ. A compositionally biased stretch (acidic residues) spans 681–692; the sequence is QDSEESQEEAPL.

This sequence belongs to the anelloviridae capsid protein family.

It localises to the virion. Self assemble to form an icosahedral capsid. This Torque teno virus (isolate Human/China/CT23F/2001) (TTV) protein is Capsid protein.